The following is a 110-amino-acid chain: Transmembrane protein 233 (110 aa).

Residues 1–32 form a disordered region; it reads MSQYASRSDSKGALDSSSPEAYTEDDKTEEDI. Residues 1–42 are Cytoplasmic-facing; sequence MSQYASRSDSKGALDSSSPEAYTEDDKTEEDIPAPSNYLWLT. A compositionally biased stretch (acidic residues) spans 22–32; it reads YTEDDKTEEDI. Positions 43 to 63 form an intramembrane region, helical; that stretch reads IISCFCPAYPVNIVALVFSIM. Topologically, residues 64–85 are cytoplasmic; sequence SLNSYNDGDYEGARRLGRNAKW. A helical transmembrane segment spans residues 86–106; sequence VAIASIIIGLVIIGVSCAVHF. The Extracellular portion of the chain corresponds to 107–110; that stretch reads SRNP.

It belongs to the CD225/Dispanin family. In terms of assembly, interacts with the giant stinging tree toxin ExTxA (P0DQP3). Interacts with Nav1.7/SCN9A. Interacts with Nav1.1/SCN1A, Nav1.2/SCN2A, Nav1.3/SCN3A, Nav1.4/SCN4A, Nav1.5/SCN5A, and Nav1.6/SCN8A. Probably expressed in nociceptive neurons. Detected in dorsal root ganglion neurons.

The protein resides in the membrane. Functionally, probable accessory protein of voltage-gated sodium channels. The protein is Transmembrane protein 233 of Mus musculus (Mouse).